Consider the following 397-residue polypeptide: Class V chitinase CHIT5 (397 aa).

A signal peptide spans 1-18; it reads MIIKLLVALIHYLHETMA. Positions 54–397 constitute a GH18 domain; sequence GVRAAYWPAW…SKQASNAWGY (344 aa). 2 N-linked (GlcNAc...) asparagine glycosylation sites follow: N128 and N147. E166 acts as the Proton donor in catalysis. N-linked (GlcNAc...) asparagine glycans are attached at residues N193, N209, N247, and N261.

It belongs to the glycosyl hydrolase 18 family. Chitinase class V subfamily.

It carries out the reaction Random endo-hydrolysis of N-acetyl-beta-D-glucosaminide (1-&gt;4)-beta-linkages in chitin and chitodextrins.. Its pathway is glycan degradation; chitin degradation. In terms of biological role, possesses chitinase activity in vitro toward glycol chitin, carboxymethyl-chitin, colloidal chitin, and the chitin oligosaccharides (N-acetylglucosamine) (GlcNAc)6 and (GlcNAc)5. Hydrolyzes (GlcNAc)6 into (GlcNAc)4 and (GlcNAc)2, or two (GlcNAc)3 molecules. Has the capacity to inhibit hyphal growth of the fungus Trichoderma viride in an agar-plate bioassay. Involved in symbiotic signaling. Required for root hair infection threads (ITs) elongation and nodule development. Possesses Nod factor (NF) hydrolase activity. NFs are lipo-chitooligosaccharide signaling molecules produced by nitrogen-fixing rhizobia to initiate nodulation (symbiosis) on the roots of legumes. Modulates NF levels and signaling to complete transition of infected nodules to functional nitrogen-fixing organs. This Lotus japonicus (Lotus corniculatus var. japonicus) protein is Class V chitinase CHIT5.